We begin with the raw amino-acid sequence, 215 residues long: Probable phosphoglycerate mutase GpmB (215 aa).

Substrate-binding positions include 8-15 (RHGETQWN), 21-22 (QG), arginine 58, arginine 60, 82-85 (ELNM), 104-105 (RR), and 151-152 (GI). Histidine 9 functions as the Tele-phosphohistidine intermediate in the catalytic mechanism. Glutamate 82 (proton donor/acceptor) is an active-site residue.

The protein belongs to the phosphoglycerate mutase family. GpmB subfamily.

The enzyme catalyses (2R)-2-phosphoglycerate = (2R)-3-phosphoglycerate. It functions in the pathway carbohydrate degradation; glycolysis; pyruvate from D-glyceraldehyde 3-phosphate: step 3/5. The protein is Probable phosphoglycerate mutase GpmB of Escherichia coli O1:K1 / APEC.